Reading from the N-terminus, the 211-residue chain is Protein-L-isoaspartate O-methyltransferase (211 aa).

S62 is a catalytic residue.

The protein belongs to the methyltransferase superfamily. L-isoaspartyl/D-aspartyl protein methyltransferase family.

It is found in the cytoplasm. It carries out the reaction [protein]-L-isoaspartate + S-adenosyl-L-methionine = [protein]-L-isoaspartate alpha-methyl ester + S-adenosyl-L-homocysteine. Functionally, catalyzes the methyl esterification of L-isoaspartyl residues in peptides and proteins that result from spontaneous decomposition of normal L-aspartyl and L-asparaginyl residues. It plays a role in the repair and/or degradation of damaged proteins. The sequence is that of Protein-L-isoaspartate O-methyltransferase from Shewanella putrefaciens (strain CN-32 / ATCC BAA-453).